The chain runs to 93 residues: Small ribosomal subunit protein uS19 (93 aa).

This sequence belongs to the universal ribosomal protein uS19 family.

Protein S19 forms a complex with S13 that binds strongly to the 16S ribosomal RNA. This is Small ribosomal subunit protein uS19 from Caldanaerobacter subterraneus subsp. tengcongensis (strain DSM 15242 / JCM 11007 / NBRC 100824 / MB4) (Thermoanaerobacter tengcongensis).